The primary structure comprises 379 residues: MSEFLPFSRPALGDAELAAVGDVLRSGWITTGPKCAQLEQAFCQLTGNRHAIAVSSATGGMHVTLMALGLGPGDEVITPSLTWVSTLNMICLLGAEPIMIDVDRDTLMVTPALIEAAITPRTRAIVPVHYAGAPADIDAIRALGERYGIPVIEDAAHAAGTAYKGRHVGAAGTAIFSFHAIKNMTCAEGGMVVTDDDALAQRIRSLKFHGLAVDAFDRTMQGRAPQAEVITPGYKYNLADINAAIALVQLEKLTQHNARRAALAQRYLHGLADTPFLPLVPPAWEHHHAWHLFIIRVDERWCGIDRDGLMQALKECGIGTGLHFRAAHTQRYYRERFPDMVLPATEWNSVRMCSLPLFPSMNDDDVERVITALRAIAKV.

At Lys182 the chain carries N6-(pyridoxal phosphate)lysine.

It belongs to the DegT/DnrJ/EryC1 family. ArnB subfamily. As to quaternary structure, homodimer. Pyridoxal 5'-phosphate is required as a cofactor.

The enzyme catalyses UDP-4-amino-4-deoxy-beta-L-arabinose + 2-oxoglutarate = UDP-beta-L-threo-pentopyranos-4-ulose + L-glutamate. It functions in the pathway nucleotide-sugar biosynthesis; UDP-4-deoxy-4-formamido-beta-L-arabinose biosynthesis; UDP-4-deoxy-4-formamido-beta-L-arabinose from UDP-alpha-D-glucuronate: step 2/3. The protein operates within bacterial outer membrane biogenesis; lipopolysaccharide biosynthesis. Functionally, catalyzes the conversion of UDP-4-keto-arabinose (UDP-Ara4O) to UDP-4-amino-4-deoxy-L-arabinose (UDP-L-Ara4N). The modified arabinose is attached to lipid A and is required for resistance to polymyxin and cationic antimicrobial peptides. The polypeptide is UDP-4-amino-4-deoxy-L-arabinose--oxoglutarate aminotransferase (Sodalis glossinidius (strain morsitans)).